We begin with the raw amino-acid sequence, 609 residues long: MNREERLKRQERIRNFSIIAHIDHGKSTLADRILEKTGALSERELREQTLDMMELERERGITIKLNAVQLTYKAKNGEEYIFHLIDTPGHVDFTYEVSRSLAACEGAILVVDAAQGIEAQTLANVYLAIDNNLEILPVINKIDLPSAEPERVRQEIEDVIGLDASEAVLASAKVGIGVEDILKQIVEKIPAPSGDPDAPLKALIFDSLYDPYRGVVAYVRIVDGTVKPGQRIKMMSTGKEFEVTEVGVFTPKPKVVDELMVGDVGYLTASIKNVQDTRVGDTITDAERPAAEPLPGYRKLNPMVFCGMYPIDTARYNDLREALEKLQLNDAALHFEPETSQALGFGFRCGFLGLLHMEIIQERIEREFHIDLITTAPSVVYKVYLTDGTEVDVDNPTNMPDPQKIDRIEEPYVKATIMVPNDYVGPVMELCQGKRGTFVDMQYLDEKRVMLIYDIPLSEIVYDFFDALKSNTKGYASFDYELIGYRPSNLVKMDILLNGEKIDALSFIVHRDSAYERGKVIVEKLKDLIPRQQFEVPVQAAIGNKIIARSTIKALRKNVLAKCYGGDVSRKRKLLEKQKEGKKRMKQIGSVEVPQEAFMAVLKIDDQKK.

One can recognise a tr-type G domain in the interval 11 to 193 (ERIRNFSIIA…QIVEKIPAPS (183 aa)). GTP contacts are provided by residues 23 to 28 (DHGKST) and 140 to 143 (NKID).

The protein belongs to the TRAFAC class translation factor GTPase superfamily. Classic translation factor GTPase family. LepA subfamily.

The protein resides in the cell membrane. The enzyme catalyses GTP + H2O = GDP + phosphate + H(+). Required for accurate and efficient protein synthesis under certain stress conditions. May act as a fidelity factor of the translation reaction, by catalyzing a one-codon backward translocation of tRNAs on improperly translocated ribosomes. Back-translocation proceeds from a post-translocation (POST) complex to a pre-translocation (PRE) complex, thus giving elongation factor G a second chance to translocate the tRNAs correctly. Binds to ribosomes in a GTP-dependent manner. In Geobacillus thermodenitrificans (strain NG80-2), this protein is Elongation factor 4.